A 167-amino-acid chain; its full sequence is Small ribosomal subunit protein uS3m (167 aa).

Residues 1–35 constitute a mitochondrion transit peptide; that stretch reads MVALYCGGGLRPLMLSWSRDLPCIWRALHTSAVCF.

The protein belongs to the universal ribosomal protein uS3 family. Component of the mitochondrial ribosome small subunit (28S) which comprises a 12S rRNA and about 30 distinct proteins.

It localises to the mitochondrion. The polypeptide is Small ribosomal subunit protein uS3m (MRPS24) (Bos taurus (Bovine)).